Here is a 603-residue protein sequence, read N- to C-terminus: Sulfite reductase [NADPH] flavoprotein alpha-component (603 aa).

One can recognise a Flavodoxin-like domain in the interval 64–202 (ITLISASQTG…QAETWRAAIV (139 aa)). FMN-binding positions include 70–75 (SQTGNA), 117–120 (STQG), and 153–162 (LGDSSYEHFA). The 217-residue stretch at 236–452 (EAPLTAHLAL…IEHNDNFRLP (217 aa)) folds into the FAD-binding FR-type domain. FAD is bound by residues Thr-326, Leu-360, 390–393 (RLYS), 408–410 (TVG), Tyr-414, and 423–426 (GGAS). NADP(+) is bound by residues 523–524 (SR), 529–533 (KIYVQ), and Asp-565. An FAD-binding site is contributed by Tyr-603.

This sequence belongs to the NADPH-dependent sulphite reductase flavoprotein subunit CysJ family. In the N-terminal section; belongs to the flavodoxin family. The protein in the C-terminal section; belongs to the flavoprotein pyridine nucleotide cytochrome reductase family. In terms of assembly, alpha(8)-beta(8). The alpha component is a flavoprotein, the beta component is a hemoprotein. FAD is required as a cofactor. It depends on FMN as a cofactor.

The catalysed reaction is hydrogen sulfide + 3 NADP(+) + 3 H2O = sulfite + 3 NADPH + 4 H(+). Its pathway is sulfur metabolism; hydrogen sulfide biosynthesis; hydrogen sulfide from sulfite (NADPH route): step 1/1. Its function is as follows. Component of the sulfite reductase complex that catalyzes the 6-electron reduction of sulfite to sulfide. This is one of several activities required for the biosynthesis of L-cysteine from sulfate. The flavoprotein component catalyzes the electron flow from NADPH -&gt; FAD -&gt; FMN to the hemoprotein component. The chain is Sulfite reductase [NADPH] flavoprotein alpha-component from Sodalis glossinidius (strain morsitans).